The following is a 246-amino-acid chain: MyoD family inhibitor domain-containing protein (246 aa).

2 disordered regions span residues 1–93 and 134–164; these read MSQE…EEET and KIQS…ASPE. The Extracellular segment spans residues 1 to 170; that stretch reads MSQEREPFSP…ASPEDGCVHC (170 aa). Residues 63–87 are compositionally biased toward polar residues; the sequence is EDNSNSQPIKAQPQRLPQPNTSALE. The 173-residue stretch at 74–246 folds into the MDFI domain; it reads QPQRLPQPNT…MECCGICFPS (173 aa). Residues 171-188 traverse the membrane as a helical segment; that stretch reads ILTCLFCEFLTLCNIVVG. Topologically, residues 189 to 246 are cytoplasmic; sequence QASCGICTSEACCCCCTEEMGDDCNCPCDMDCGIMDACCESSDCLEICMECCGICFPS.

It belongs to the MDFI family. As to expression, expressed broadly at a low level in the early embryo.

Its subcellular location is the cytoplasm. It is found in the cell membrane. The protein localises to the secreted. Its function is as follows. Required to control the activity of various transcription factors through their sequestration in the cytoplasm. Retains nuclear Zic proteins in the cytoplasm and inhibits their transcriptional activation. Required for dorsoanterior development. Necessary for siamois to activate downstream target genes, including gsc, during execution of the dorsal organizer program. Also regulates the transcriptional activity of TCF7L1/TCF3 by interacting directly with TCF7L1/TCF3 and preventing it from binding DNA. Involved in the development of lymphatic vessel valves. It is required to promote lymphatic endothelial cell migration, in a process that involves down-regulation of integrin beta 1 activation and control of cell adhesion to the extracellular matrix. The sequence is that of MyoD family inhibitor domain-containing protein from Xenopus laevis (African clawed frog).